Here is a 281-residue protein sequence, read N- to C-terminus: 4-diphosphocytidyl-2-C-methyl-D-erythritol kinase (281 aa).

Lys-15 is a catalytic residue. Residue 98–108 (PTGAGLGGGSS) coordinates ATP. Asp-140 is an active-site residue.

This sequence belongs to the GHMP kinase family. IspE subfamily.

It catalyses the reaction 4-CDP-2-C-methyl-D-erythritol + ATP = 4-CDP-2-C-methyl-D-erythritol 2-phosphate + ADP + H(+). Its pathway is isoprenoid biosynthesis; isopentenyl diphosphate biosynthesis via DXP pathway; isopentenyl diphosphate from 1-deoxy-D-xylulose 5-phosphate: step 3/6. Functionally, catalyzes the phosphorylation of the position 2 hydroxy group of 4-diphosphocytidyl-2C-methyl-D-erythritol. The protein is 4-diphosphocytidyl-2-C-methyl-D-erythritol kinase of Neisseria meningitidis serogroup A / serotype 4A (strain DSM 15465 / Z2491).